Consider the following 325-residue polypeptide: NADH-quinone oxidoreductase subunit H (325 aa).

A run of 9 helical transmembrane segments spans residues 11–31 (ILLS…CGAF), 50–69 (NRVG…KMFF), 81–101 (VIFT…FAIV), 114–134 (IGIL…LFAG), 154–174 (VSYE…AGSF), 186–206 (LWNV…GVAV), 237–257 (FFVG…TLFF), 265–285 (LPPF…FILI), and 304–324 (VCLP…LWQA).

This sequence belongs to the complex I subunit 1 family. As to quaternary structure, NDH-1 is composed of 13 different subunits. Subunits NuoA, H, J, K, L, M, N constitute the membrane sector of the complex.

It localises to the cell inner membrane. The enzyme catalyses a quinone + NADH + 5 H(+)(in) = a quinol + NAD(+) + 4 H(+)(out). In terms of biological role, NDH-1 shuttles electrons from NADH, via FMN and iron-sulfur (Fe-S) centers, to quinones in the respiratory chain. The immediate electron acceptor for the enzyme in this species is believed to be ubiquinone. Couples the redox reaction to proton translocation (for every two electrons transferred, four hydrogen ions are translocated across the cytoplasmic membrane), and thus conserves the redox energy in a proton gradient. This subunit may bind ubiquinone. In Salmonella arizonae (strain ATCC BAA-731 / CDC346-86 / RSK2980), this protein is NADH-quinone oxidoreductase subunit H.